The following is a 216-amino-acid chain: tRNA (guanine-N(7)-)-methyltransferase (216 aa).

Residues Glu-44, Glu-69, Asn-96, and Asp-118 each coordinate S-adenosyl-L-methionine. Residue Asp-118 is part of the active site. Lys-122 is a substrate binding site. The interaction with RNA stretch occupies residues 124 to 129; that stretch reads RHEKRR. Substrate contacts are provided by residues Asp-154 and 191–194; that span reads TEYE.

The protein belongs to the class I-like SAM-binding methyltransferase superfamily. TrmB family.

The catalysed reaction is guanosine(46) in tRNA + S-adenosyl-L-methionine = N(7)-methylguanosine(46) in tRNA + S-adenosyl-L-homocysteine. It participates in tRNA modification; N(7)-methylguanine-tRNA biosynthesis. Its function is as follows. Catalyzes the formation of N(7)-methylguanine at position 46 (m7G46) in tRNA. In Geobacillus thermodenitrificans (strain NG80-2), this protein is tRNA (guanine-N(7)-)-methyltransferase.